The sequence spans 346 residues: uncharacterized protein (346 aa).

This is an uncharacterized protein from Borreliella burgdorferi (strain ATCC 35210 / DSM 4680 / CIP 102532 / B31) (Borrelia burgdorferi).